Here is a 146-residue protein sequence, read N- to C-terminus: Hemoglobin subunit beta (146 aa).

Valine 1 carries the N-acetylvaline modification. The 145-residue stretch at 2-146 (HLTPEEKALV…VANALAHKYH (145 aa)) folds into the Globin domain. Lysine 59 is modified (N6-acetyllysine). Histidine 63 provides a ligand contact to heme b. Lysine 82 is subject to N6-acetyllysine. A heme b-binding site is contributed by histidine 92. The residue at position 93 (cysteine 93) is an S-nitrosocysteine. Lysine 144 bears the N6-acetyllysine mark.

This sequence belongs to the globin family. In terms of assembly, heterotetramer of two alpha chains and two beta chains. In terms of tissue distribution, red blood cells.

Its function is as follows. Involved in oxygen transport from the lung to the various peripheral tissues. The protein is Hemoglobin subunit beta (HBB) of Trichechus inunguis (Amazon manatee).